A 958-amino-acid chain; its full sequence is Importin-13 (958 aa).

20 HEAT repeats span residues 19 to 49 (ENVEKALHQLYYDPNIENKNLAQKWLMQAQV), 51 to 83 (PQAWHFSWLLLNMDKVPEIQYSAPAPCTSRSPA), 90 to 130 (PDQY…LSMM), 137 to 174 (AVADMVRMFQAEDSNVDGRARCLALLELLTVLPEEFQT), 189 to 226 (LAQECGSVFPLLEQLLQQQDSPGFIKQKVLKCFSSWVQ), 231 to 263 (LMDCENLIQAAFTSLQDPELFDTAVEAVVNAIS), 271 to 320 (VNTL…ALLD), 325 to 367 (WQSF…DDIL), 370 to 433 (EPDK…YEML), 435 to 471 (AELLSSLYDKLGRLLTNTEQPSTWQHTEALLYGFQSI), 482 to 517 (VVPGLIGLIPRISISNVQLADTVMFTIGALSEWLAD), 519 to 553 (PVMINNVLPLVLQALGNPELSISSVSTLKKICREC), 557 to 595 (LPPYAANIVAVSQEVLMKQIHKTSQCMWLMQALGFLLSA), 598 to 643 (VEEI…SNLF), 671 to 711 (PVVV…VKTL), 715 to 749 (FAPMVPQLCEMLGQMYSTIPQASAIDLTRQLVHIF), 756 to 798 (FPPI…ALKR), 810 to 840 (VKALFHCGVLSLKFPEAPTVKASCGFFTELL), 855 to 888 (ENGKVLLQAVLEGVGGQASRSLMDHFAEILFALN), and 892 to 926 (FSYLSIWIKEAMQQDGFPSARVSPEQKETFSQQIL). An Importin N-terminal domain is found at 40 to 106 (AQKWLMQAQV…KSQLFTHITR (67 aa)).

The protein belongs to the importin beta family.

Its subcellular location is the cytoplasm. It is found in the nucleus. In terms of biological role, functions in nuclear protein import as nuclear transport receptor. Serves as receptor for nuclear localization signals (NLS) in cargo substrates. Is thought to mediate docking of the importin/substrate complex to the nuclear pore complex (NPC) through binding to nucleoporin and the complex is subsequently translocated through the pore by an energy requiring, Ran-dependent mechanism. At the nucleoplasmic side of the NPC, Ran binds to the importin, the importin/substrate complex dissociates and importin is re-exported from the nucleus to the cytoplasm where GTP hydrolysis releases Ran. The directionality of nuclear import is thought to be conferred by an asymmetric distribution of the GTP- and GDP-bound forms of Ran between the cytoplasm and nucleus. The sequence is that of Importin-13 (IPO13) from Gallus gallus (Chicken).